Reading from the N-terminus, the 155-residue chain is UPF0178 protein RPC_3085 (155 aa).

The protein belongs to the UPF0178 family.

The protein is UPF0178 protein RPC_3085 of Rhodopseudomonas palustris (strain BisB18).